We begin with the raw amino-acid sequence, 375 residues long: Queuine tRNA-ribosyltransferase (375 aa).

The active-site Proton acceptor is aspartate 89. Substrate-binding positions include 89–93, aspartate 143, glutamine 187, and glycine 214; that span reads DSGGF. Residues 245 to 251 are RNA binding; that stretch reads GVGKPED. The active-site Nucleophile is the aspartate 264. The segment at 269–273 is RNA binding; important for wobble base 34 recognition; it reads TRNAR. Residues cysteine 302, cysteine 304, cysteine 307, and histidine 333 each contribute to the Zn(2+) site.

The protein belongs to the queuine tRNA-ribosyltransferase family. Homodimer. Within each dimer, one monomer is responsible for RNA recognition and catalysis, while the other monomer binds to the replacement base PreQ1. It depends on Zn(2+) as a cofactor.

It carries out the reaction 7-aminomethyl-7-carbaguanine + guanosine(34) in tRNA = 7-aminomethyl-7-carbaguanosine(34) in tRNA + guanine. It functions in the pathway tRNA modification; tRNA-queuosine biosynthesis. Catalyzes the base-exchange of a guanine (G) residue with the queuine precursor 7-aminomethyl-7-deazaguanine (PreQ1) at position 34 (anticodon wobble position) in tRNAs with GU(N) anticodons (tRNA-Asp, -Asn, -His and -Tyr). Catalysis occurs through a double-displacement mechanism. The nucleophile active site attacks the C1' of nucleotide 34 to detach the guanine base from the RNA, forming a covalent enzyme-RNA intermediate. The proton acceptor active site deprotonates the incoming PreQ1, allowing a nucleophilic attack on the C1' of the ribose to form the product. After dissociation, two additional enzymatic reactions on the tRNA convert PreQ1 to queuine (Q), resulting in the hypermodified nucleoside queuosine (7-(((4,5-cis-dihydroxy-2-cyclopenten-1-yl)amino)methyl)-7-deazaguanosine). In Aliivibrio salmonicida (strain LFI1238) (Vibrio salmonicida (strain LFI1238)), this protein is Queuine tRNA-ribosyltransferase.